The sequence spans 504 residues: Paired zinc finger protein 1 (504 aa).

2 consecutive C2H2-type zinc fingers follow at residues 12–35 and 39–62; these read LLCG…RQRH and HMCL…KNKH. A C2H2-type 3; degenerate zinc finger spans residues 68–91; the sequence is FICVCCNWSFGTEIYLKCHEECMK. Disordered regions lie at residues 115-136 and 154-173; these read ALNT…SPVP and IESA…LVSG. Polar residues predominate over residues 159–172; the sequence is RSSASTSTPRTLVS. 2 consecutive C2H2-type zinc fingers follow at residues 179–202 and 206–229; these read IPCG…RRFH and HTCL…KSQH. Residues 235–258 form a C2H2-type 6; degenerate zinc finger; the sequence is YNCLCCNWTFLNQVHLISHKTCLK. The C2H2-type 7 zinc-finger motif lies at 309–332; sequence LSCKSCGKFFYSERSLSKHHRQIH. Residues 365 to 389 form a C2H2-type 8; degenerate zinc finger; it reads FNCRCCNWSFATRRCLMSHVECLKK.

In terms of tissue distribution, expressed in proximal gonad.

In terms of biological role, possible transcriptional regulator. Involved in promoting segregation of chromosomes during meiosis, perhaps acting downstream of the let-60 RAS / mpk-1 MAPK signaling pathway. This Caenorhabditis elegans protein is Paired zinc finger protein 1.